Here is a 276-residue protein sequence, read N- to C-terminus: Energy-coupling factor transporter ATP-binding protein EcfA1 (276 aa).

An ABC transporter domain is found at I2–D237. G37–S44 lines the ATP pocket.

Belongs to the ABC transporter superfamily. Energy-coupling factor EcfA family. As to quaternary structure, forms a stable energy-coupling factor (ECF) transporter complex composed of 2 membrane-embedded substrate-binding proteins (S component), 2 ATP-binding proteins (A component) and 2 transmembrane proteins (T component).

Its subcellular location is the cell membrane. ATP-binding (A) component of a common energy-coupling factor (ECF) ABC-transporter complex. Unlike classic ABC transporters this ECF transporter provides the energy necessary to transport a number of different substrates. The polypeptide is Energy-coupling factor transporter ATP-binding protein EcfA1 (Streptococcus thermophilus (strain CNRZ 1066)).